Consider the following 657-residue polypeptide: MLFLCRASPLLQRTALSSPLRFFAPPKSSFNRTFANTAVRLSIEMETVDTSERLVQLRELMKRNNLDVYIVPSEDSHQSEYIAHCDARREFISGFTGSAGTAVISSTAAALSTDGRYFNQAAKQLDSNWTLLKRGLEGVPTWQEWTTEQAEGGKTVGVDPSVITAASARKLSETLEKSGSKLIGIEQNLVDQIWGDKRPARPNETVKIHPAEYAGKPFQEKIADLRKELKTKKRAGFIVSVLDEIAWLFNLRGNDIPYNPVFFSYAVITPETVDLYINDEKLSPEVKAHLGSDVVVKPYESIFADARALSVNAPLTENGSPMKYLTSNKASWALSLSFGGEKKLDEARSPISDAKAIKNEVELKGMRNCHIRDGAALSEYFAWLENELINKKSTLDEVDGADKLEQIRSKHDKFVGLSFDTISSTGPNAAVIHYKPEKGICSVIDPNAIYLCDSGGQYLDGTTDTTRTFHFGTPTEMEKKAFTLVLKGLIALDTAVFPKGTSGFALDALARQHLWRYGLDYLHGTGHGVGAYLNVHEGPIGVGTRIQYSEVSLSPGNVISDEPGYYEDGKFGIRIENIIMAREVETPYKFGEKSWLGFEHVTMTPIGQNLIETSLLSEEERQWVNNYHAEVWEKTSGYFKQDELTLNWLKKETKPLK.

The Mn(2+) site is built by D453, D464, E562, and E576.

Belongs to the peptidase M24B family. Requires Mn(2+) as cofactor.

It catalyses the reaction Release of any N-terminal amino acid, including proline, that is linked to proline, even from a dipeptide or tripeptide.. Catalyzes the removal of a penultimate prolyl residue from the N-termini of peptides. This chain is Probable Xaa-Pro aminopeptidase P (ampp), found in Talaromyces marneffei (strain ATCC 18224 / CBS 334.59 / QM 7333) (Penicillium marneffei).